We begin with the raw amino-acid sequence, 382 residues long: Na(+)/H(+) antiporter NhaA 2 (382 aa).

The next 11 membrane-spanning stretches (helical) occupy residues 7-27 (MALSETFPGILLIFFTFLALL), 58-78 (LDLWINDGLIAIFFLCIGLEL), 94-114 (SLPIFGALGGMITPALIFAAI), 124-144 (GWAIPTATDIAFAVGILMLLG), 153-173 (LFLLSLAIFDDLGAIVIIALF), 178-198 (LSALAIIICLFCIFALLLLNY), 199-219 (YHITHLSLYVLVGVVLWIAML), 255-275 (NPWVVYFILPLFAFANAGIDI), 291-311 (IILGLFLGKQLGVFIFCFIAI), 327-347 (FYGICILTGIGFTMSLFIDGL), and 361-381 (LAILIASFLSAIVGFIYLKIV).

The protein belongs to the NhaA Na(+)/H(+) (TC 2.A.33) antiporter family.

Its subcellular location is the cell inner membrane. It carries out the reaction Na(+)(in) + 2 H(+)(out) = Na(+)(out) + 2 H(+)(in). Na(+)/H(+) antiporter that extrudes sodium in exchange for external protons. The sequence is that of Na(+)/H(+) antiporter NhaA 2 from Campylobacter jejuni subsp. doylei (strain ATCC BAA-1458 / RM4099 / 269.97).